The chain runs to 3907 residues: Cyclo-acetoacetyl-L-tryptophan synthase (3907 aa).

The 435-residue stretch at 2–436 folds into the Ketosynthase family 3 (KS3) domain; the sequence is KTPIAVVGTA…GTNAHAIIES (435 aa). Residues cysteine 176, histidine 313, and histidine 356 each act as for beta-ketoacyl synthase activity in the active site. The malonyl-CoA:ACP transacylase (MAT) domain stretch occupies residues 555-870; the sequence is IFTGQGAQWA…SLLRRGQNDL (316 aa). The tract at residues 937-1074 is N-terminal hotdog fold; that stretch reads HPLLGRRSAD…ARLTLHLGDA (138 aa). The dehydratase (DH) domain stretch occupies residues 937–1236; sequence HPLLGRRSAD…GLVMKSVPQP (300 aa). The 303-residue stretch at 937–1239 folds into the PKS/mFAS DH domain; sequence HPLLGRRSAD…MKSVPQPDTS (303 aa). The tract at residues 1092 to 1239 is C-terminal hotdog fold; that stretch reads LAPVDVADLY…MKSVPQPDTS (148 aa). The interval 1386 to 1573 is methyltransferase (MT) domain; the sequence is AAMFSQLSKD…FSGIDHIFHD (188 aa). Residues 2064-2238 are ketoreductase (KR)domain; it reads GTYFMIDMAT…VGSVMALGMV (175 aa). Residues 2324-2352 are disordered; sequence TKEGQYAEQEDSPSLLVPDEQLQESGPGR. Positions 2356–2430 constitute a Carrier 1 domain; the sequence is DDLLARLSGK…LCEKAVPKPN (75 aa). An O-(pantetheine 4'-phosphoryl)serine modification is found at serine 2390. The interval 2504-2926 is condensation; it reads MSPHQSQIWF…SSNPLISVQS (423 aa). Positions 2959–3359 are adenylation; the sequence is FQDMVDQYGD…GSLILLGRMD (401 aa). The Carrier 2 domain maps to 3474–3549; sequence KRLTLGEGEL…QMALKVDARK (76 aa). Serine 3509 carries the O-(pantetheine 4'-phosphoryl)serine modification. The reductase (RED) domain stretch occupies residues 3594-3813; it reads LTGSTSFLGR…DFQKVEIIAE (220 aa).

The protein in the C-terminal section; belongs to the NRP synthetase family.

It catalyses the reaction L-tryptophan + malonyl-CoA + acetyl-CoA = cyclo-acetoacetyl-L-tryptophan + CO2 + 2 CoA + H2O. Its pathway is secondary metabolite biosynthesis. In terms of biological role, hybrid PKS-NRPS synthetase; part of the gene cluster that mediates the biosynthesis of the fungal neurotoxin cyclopiazonic acid (CPA), a nanomolar inhibitor of Ca(2+)-ATPase with a unique pentacyclic indole tetramic acid scaffold. The hybrid two module polyketide synthase-nonribosomal peptide synthetase (PKS-NRPS) cpaS incorporates acetyl-CoA, malonyl-CoA, and tryptophan (Trp) and utilizes a C-terminal redox-incompetent reductase domain to make and release the tryptophan tetramic acid, cyclo-acetoacetyl-L-tryptophan (c-AATrp), as the first intermediate in the pathway. CpaS catalyzes a Dieckmann-type cyclization on the N-acetoacetyl-Trp intermediate bound in thioester linkage to the phosphopantetheinyl arm of the T domain to form and release c-AATrp. CpaD then regiospecifically dimethylallylates c-AATrp to form beta-cyclopiazonic acid. CpaD discriminates against free Trp but accepts tryptophan-containing thiohydantoins, diketopiperazines, and linear peptides as substrates for C4-prenylation and also acts as regiospecific O-dimethylallyltransferase (DMAT) on a tyrosine-derived tetramic acid. The beta-cyclopiazonate dehydrogenase cpaO then carries out the dehydrogenation of beta-CPA to yield an unstable enimine product, which is captured by intramolecular cyclization to create the pentacyclic fused scaffold of alpha-cyclopiazonate. Finally, the cytochrome P450 monooxygenase cpaH mediates the conversion of CPA into the less toxic 2-oxocyclopiazonic acid, the end product of the CPA pathway in A.oryza. The polypeptide is Cyclo-acetoacetyl-L-tryptophan synthase (Aspergillus oryzae (Yellow koji mold)).